We begin with the raw amino-acid sequence, 192 residues long: Ribosome maturation factor RimM (192 aa).

Positions 97 to 172 (EDEYYLADLI…VVLADPPALV (76 aa)) constitute a PRC barrel domain. Positions 168–192 (PPALVGEPEGPESPAEDDDGERHYD) are disordered.

This sequence belongs to the RimM family. In terms of assembly, binds ribosomal protein uS19.

The protein localises to the cytoplasm. An accessory protein needed during the final step in the assembly of 30S ribosomal subunit, possibly for assembly of the head region. Essential for efficient processing of 16S rRNA. May be needed both before and after RbfA during the maturation of 16S rRNA. It has affinity for free ribosomal 30S subunits but not for 70S ribosomes. This chain is Ribosome maturation factor RimM, found in Caulobacter sp. (strain K31).